The primary structure comprises 226 residues: Deoxyribose-phosphate aldolase (226 aa).

Asp96 serves as the catalytic Proton donor/acceptor. Residue Lys157 is the Schiff-base intermediate with acetaldehyde of the active site. Lys185 serves as the catalytic Proton donor/acceptor.

This sequence belongs to the DeoC/FbaB aldolase family. DeoC type 1 subfamily.

The protein resides in the cytoplasm. The catalysed reaction is 2-deoxy-D-ribose 5-phosphate = D-glyceraldehyde 3-phosphate + acetaldehyde. The protein operates within carbohydrate degradation; 2-deoxy-D-ribose 1-phosphate degradation; D-glyceraldehyde 3-phosphate and acetaldehyde from 2-deoxy-alpha-D-ribose 1-phosphate: step 2/2. Catalyzes a reversible aldol reaction between acetaldehyde and D-glyceraldehyde 3-phosphate to generate 2-deoxy-D-ribose 5-phosphate. This chain is Deoxyribose-phosphate aldolase, found in Trichormus variabilis (strain ATCC 29413 / PCC 7937) (Anabaena variabilis).